The sequence spans 166 residues: Small ribosomal subunit protein uS5 (166 aa).

One can recognise an S5 DRBM domain in the interval 11–74 (LQEKLIAVNR…EKARRNMKTV (64 aa)).

It belongs to the universal ribosomal protein uS5 family. Part of the 30S ribosomal subunit. Contacts proteins S4 and S8.

Its function is as follows. With S4 and S12 plays an important role in translational accuracy. In terms of biological role, located at the back of the 30S subunit body where it stabilizes the conformation of the head with respect to the body. This is Small ribosomal subunit protein uS5 from Photorhabdus laumondii subsp. laumondii (strain DSM 15139 / CIP 105565 / TT01) (Photorhabdus luminescens subsp. laumondii).